A 261-amino-acid polypeptide reads, in one-letter code: uncharacterized protein (261 aa).

A divalent metal cation is bound by residues aspartate 43, histidine 45, aspartate 75, asparagine 106, histidine 197, and histidine 199.

This sequence belongs to the metallophosphoesterase superfamily. A divalent metal cation serves as cofactor.

This is an uncharacterized protein from Aquifex aeolicus (strain VF5).